The following is a 374-amino-acid chain: Alanine racemase (374 aa).

Lysine 35 serves as the catalytic Proton acceptor; specific for D-alanine. The residue at position 35 (lysine 35) is an N6-(pyridoxal phosphate)lysine. Arginine 130 is a binding site for substrate. The active-site Proton acceptor; specific for L-alanine is the tyrosine 261. A substrate-binding site is contributed by methionine 309.

Belongs to the alanine racemase family. The cofactor is pyridoxal 5'-phosphate.

It carries out the reaction L-alanine = D-alanine. It functions in the pathway amino-acid biosynthesis; D-alanine biosynthesis; D-alanine from L-alanine: step 1/1. Catalyzes the interconversion of L-alanine and D-alanine. May also act on other amino acids. In Albidiferax ferrireducens (strain ATCC BAA-621 / DSM 15236 / T118) (Rhodoferax ferrireducens), this protein is Alanine racemase (alr).